The following is a 556-amino-acid chain: Glutamine--tRNA ligase (556 aa).

Residues 34 to 44 (PEPNGYLHIGH) carry the 'HIGH' region motif. ATP contacts are provided by residues 35-37 (EPN) and 41-47 (HIGHAKS). Residues Asp-67 and Tyr-212 each coordinate L-glutamine. Residues Thr-231, 261 to 262 (RL), and 269 to 271 (MSK) contribute to the ATP site. Residues 268 to 272 (IMSKR) carry the 'KMSKS' region motif.

The protein belongs to the class-I aminoacyl-tRNA synthetase family. In terms of assembly, monomer.

It is found in the cytoplasm. The enzyme catalyses tRNA(Gln) + L-glutamine + ATP = L-glutaminyl-tRNA(Gln) + AMP + diphosphate. This chain is Glutamine--tRNA ligase, found in Sodalis glossinidius (strain morsitans).